The chain runs to 158 residues: Transcription elongation factor GreA (158 aa).

It belongs to the GreA/GreB family.

In terms of biological role, necessary for efficient RNA polymerase transcription elongation past template-encoded arresting sites. The arresting sites in DNA have the property of trapping a certain fraction of elongating RNA polymerases that pass through, resulting in locked ternary complexes. Cleavage of the nascent transcript by cleavage factors such as GreA or GreB allows the resumption of elongation from the new 3'terminus. GreA releases sequences of 2 to 3 nucleotides. In Zymomonas mobilis subsp. mobilis (strain ATCC 31821 / ZM4 / CP4), this protein is Transcription elongation factor GreA.